Consider the following 213-residue polypeptide: Lysozyme g-like protein 2 (213 aa).

A signal peptide spans 1 to 19 (MVPSVVFWGLIALVGTAKG). Disulfide bonds link cysteine 40-cysteine 93 and cysteine 54-cysteine 62. Residue glutamate 106 is part of the active site.

This sequence belongs to the glycosyl hydrolase 23 family.

The protein localises to the secreted. In terms of biological role, may act as a potent antibacterial protein that may play a role in the innate immunity. This chain is Lysozyme g-like protein 2 (Lyg2), found in Mus musculus (Mouse).